We begin with the raw amino-acid sequence, 329 residues long: DNA-directed RNA polymerase subunit alpha (329 aa).

Residues 1-235 (MQGSVTEFLK…EQLEAFVDLR (235 aa)) are alpha N-terminal domain (alpha-NTD). An alpha C-terminal domain (alpha-CTD) region spans residues 249-329 (FDPILLRPVD…NWPPASIADE (81 aa)).

Belongs to the RNA polymerase alpha chain family. Homodimer. The RNAP catalytic core consists of 2 alpha, 1 beta, 1 beta' and 1 omega subunit. When a sigma factor is associated with the core the holoenzyme is formed, which can initiate transcription.

The catalysed reaction is RNA(n) + a ribonucleoside 5'-triphosphate = RNA(n+1) + diphosphate. DNA-dependent RNA polymerase catalyzes the transcription of DNA into RNA using the four ribonucleoside triphosphates as substrates. This chain is DNA-directed RNA polymerase subunit alpha, found in Pectobacterium atrosepticum (strain SCRI 1043 / ATCC BAA-672) (Erwinia carotovora subsp. atroseptica).